Consider the following 119-residue polypeptide: U-scoloptoxin(01)-Cw1a (119 aa).

Residues 1 to 22 (MSKATNFYLFVLLGVFVALVRT) form the signal peptide. The Chitin-binding type-2 domain occupies 38–96 (SFSCDGKKPGYYADQQMECQVYHVCTPDNEHAVLLCGPGTIFNQKHLVCDFPSNYACAD). A disulfide bridge links Cys73 with Cys86.

The protein belongs to the scoloptoxin-01 family. Contains 3 disulfide bonds. In terms of tissue distribution, expressed by the venom gland.

The protein resides in the secreted. The chain is U-scoloptoxin(01)-Cw1a from Cormocephalus westwoodi (Westwood's green centipede).